The primary structure comprises 169 residues: Peptide methionine sulfoxide reductase MsrA (169 aa).

The active site involves Cys10.

The protein belongs to the MsrA Met sulfoxide reductase family.

The catalysed reaction is L-methionyl-[protein] + [thioredoxin]-disulfide + H2O = L-methionyl-(S)-S-oxide-[protein] + [thioredoxin]-dithiol. The enzyme catalyses [thioredoxin]-disulfide + L-methionine + H2O = L-methionine (S)-S-oxide + [thioredoxin]-dithiol. In terms of biological role, has an important function as a repair enzyme for proteins that have been inactivated by oxidation. Catalyzes the reversible oxidation-reduction of methionine sulfoxide in proteins to methionine. The protein is Peptide methionine sulfoxide reductase MsrA of Streptococcus agalactiae serotype Ia (strain ATCC 27591 / A909 / CDC SS700).